The chain runs to 953 residues: Eukaryotic translation initiation factor 3 subunit A (953 aa).

In terms of domain architecture, PCI spans 323-504 (LQKMASHVLL…KSISFGLDLH (182 aa)). Coiled-coil stretches lie at residues 593 to 642 (QERE…KRQA), 670 to 704 (MNAD…VDYF), and 732 to 877 (ENQE…LEER). The interval 603–623 (IKKQKVENQEAEQKRLDEERR) is disordered. Disordered stretches follow at residues 810 to 861 (ERKK…EIDR) and 893 to 953 (GWGD…ITMS). Composition is skewed to basic and acidic residues over residues 812-861 (KKIE…EIDR), 895-919 (GDHE…RGGD), and 928-953 (WQRE…ITMS).

Belongs to the eIF-3 subunit A family. Component of the eukaryotic translation initiation factor 3 (eIF-3) complex.

The protein resides in the cytoplasm. RNA-binding component of the eukaryotic translation initiation factor 3 (eIF-3) complex, which is involved in protein synthesis of a specialized repertoire of mRNAs and, together with other initiation factors, stimulates binding of mRNA and methionyl-tRNAi to the 40S ribosome. The eIF-3 complex specifically targets and initiates translation of a subset of mRNAs involved in cell proliferation. This Nematostella vectensis (Starlet sea anemone) protein is Eukaryotic translation initiation factor 3 subunit A.